We begin with the raw amino-acid sequence, 293 residues long: Capsid protein (293 aa).

The tract at residues 1–39 (MPPKPDPSSSGEAPQAMQPAPPPRAEGHMYAQPEGPGQN) is disordered.

Belongs to the potexviruses coat protein family.

It localises to the virion. Its function is as follows. Required for genome encapsidation. Forms ribonucleoprotein complexes along with TGB1 helicase and viral RNA. The chain is Capsid protein from Solanum tuberosum (Potato).